The chain runs to 444 residues: Phosphoglucosamine mutase (444 aa).

Serine 102 functions as the Phosphoserine intermediate in the catalytic mechanism. Residues serine 102, aspartate 241, aspartate 243, and aspartate 245 each contribute to the Mg(2+) site. Phosphoserine is present on serine 102.

This sequence belongs to the phosphohexose mutase family. Mg(2+) serves as cofactor. Post-translationally, activated by phosphorylation.

It carries out the reaction alpha-D-glucosamine 1-phosphate = D-glucosamine 6-phosphate. Catalyzes the conversion of glucosamine-6-phosphate to glucosamine-1-phosphate. The chain is Phosphoglucosamine mutase from Paracidovorax citrulli (strain AAC00-1) (Acidovorax citrulli).